A 161-amino-acid chain; its full sequence is Phosphopantetheine adenylyltransferase (161 aa).

Ser9 contacts substrate. ATP-binding positions include 9–10 (SF) and His17. Residues Lys41, Val73, and Lys87 each contribute to the substrate site. ATP is bound by residues 88–90 (GLR), Glu98, and 122–128 (YSFVSSS).

This sequence belongs to the bacterial CoaD family. In terms of assembly, homohexamer. The cofactor is Mg(2+).

Its subcellular location is the cytoplasm. It carries out the reaction (R)-4'-phosphopantetheine + ATP + H(+) = 3'-dephospho-CoA + diphosphate. It participates in cofactor biosynthesis; coenzyme A biosynthesis; CoA from (R)-pantothenate: step 4/5. Reversibly transfers an adenylyl group from ATP to 4'-phosphopantetheine, yielding dephospho-CoA (dPCoA) and pyrophosphate. The polypeptide is Phosphopantetheine adenylyltransferase (Mycobacterium bovis (strain ATCC BAA-935 / AF2122/97)).